The chain runs to 251 residues: Aspartate/glutamate leucyltransferase (251 aa).

This sequence belongs to the R-transferase family. Bpt subfamily.

It is found in the cytoplasm. The catalysed reaction is N-terminal L-glutamyl-[protein] + L-leucyl-tRNA(Leu) = N-terminal L-leucyl-L-glutamyl-[protein] + tRNA(Leu) + H(+). The enzyme catalyses N-terminal L-aspartyl-[protein] + L-leucyl-tRNA(Leu) = N-terminal L-leucyl-L-aspartyl-[protein] + tRNA(Leu) + H(+). Functions in the N-end rule pathway of protein degradation where it conjugates Leu from its aminoacyl-tRNA to the N-termini of proteins containing an N-terminal aspartate or glutamate. This chain is Aspartate/glutamate leucyltransferase, found in Xanthomonas axonopodis pv. citri (strain 306).